A 427-amino-acid polypeptide reads, in one-letter code: MEILSLHQWKQQQDTKSSTIRNKQVDQDVLRIIEQVQIQGDEALKHYTLQFDQVNLNSFEVTSNEWEQAIKKVDSTLLDALETAAGNIQRYQSEMLESNWSITPETGVKLGQQVNPLDRVGIYIPGGKASYPSTVLMDAIPAKVAGVKEIIITSPPNKNGEIDPVVLAAAKIAGVTKVYKVGGAQAIAALTYGTETIPSVDKIVGPGNIYVTRAKKWVFGDIAIDMIAGPSEICIFADSSAPVPYVAADLLSQAEHDEEASSLCITTDRSFAKLLQEEVNRQIPLLERKEIIEASISQNGKIIICDNNEEAINTINQLAPEHLQLMTIDSEQLCPKIKHAGAIFIGNYSSEPLGDYFAGPSHTLPTNGTAKFSSPLGVYDFVKKTSLIQYSKNKLAEAADTIITLAEAEGLTAHANAIRIRKENDNA.

The NAD(+) site is built by Tyr-123, Gln-185, and Asn-208. 3 residues coordinate substrate: Ser-231, Gln-253, and His-256. Residues Gln-253 and His-256 each contribute to the Zn(2+) site. Active-site proton acceptor residues include Glu-321 and His-322. The substrate site is built by His-322, Asp-355, Glu-409, and His-414. Residue Asp-355 coordinates Zn(2+). His-414 contacts Zn(2+).

This sequence belongs to the histidinol dehydrogenase family. Requires Zn(2+) as cofactor.

It carries out the reaction L-histidinol + 2 NAD(+) + H2O = L-histidine + 2 NADH + 3 H(+). Its pathway is amino-acid biosynthesis; L-histidine biosynthesis; L-histidine from 5-phospho-alpha-D-ribose 1-diphosphate: step 9/9. Functionally, catalyzes the sequential NAD-dependent oxidations of L-histidinol to L-histidinaldehyde and then to L-histidine. The sequence is that of Histidinol dehydrogenase from Oceanobacillus iheyensis (strain DSM 14371 / CIP 107618 / JCM 11309 / KCTC 3954 / HTE831).